The following is a 219-amino-acid chain: tRNA (guanine-N(7)-)-methyltransferase (219 aa).

S-adenosyl-L-methionine is bound by residues Glu43, Asp68, Glu101, and Asn124. 2 residues coordinate substrate: Lys128 and Asp160.

Belongs to the class I-like SAM-binding methyltransferase superfamily. TrmB family.

The catalysed reaction is guanosine(46) in tRNA + S-adenosyl-L-methionine = N(7)-methylguanosine(46) in tRNA + S-adenosyl-L-homocysteine. Its pathway is tRNA modification; N(7)-methylguanine-tRNA biosynthesis. Functionally, catalyzes the formation of N(7)-methylguanine at position 46 (m7G46) in tRNA. This is tRNA (guanine-N(7)-)-methyltransferase from Clostridium beijerinckii (strain ATCC 51743 / NCIMB 8052) (Clostridium acetobutylicum).